Reading from the N-terminus, the 158-residue chain is MSDLTHLDESGRARMVDVGAKDDTLREAVARGEVRMRPETLQRLAAGDMPKGDVLATARIAGIMAAKRAPDLIPLCHPLLLTHVAVDARLDVATSTVQIEATVRTVGKTGVEMEALTAVSVAALTIYDMCKAIDREMQIGAIRLVRKSGGRSGDFVND.

Substrate-binding positions include 75 to 77 (LCH) and 113 to 114 (ME). Asp128 is an active-site residue.

Belongs to the MoaC family. As to quaternary structure, homohexamer; trimer of dimers.

The enzyme catalyses (8S)-3',8-cyclo-7,8-dihydroguanosine 5'-triphosphate = cyclic pyranopterin phosphate + diphosphate. The protein operates within cofactor biosynthesis; molybdopterin biosynthesis. Its function is as follows. Catalyzes the conversion of (8S)-3',8-cyclo-7,8-dihydroguanosine 5'-triphosphate to cyclic pyranopterin monophosphate (cPMP). The chain is Cyclic pyranopterin monophosphate synthase from Roseiflexus sp. (strain RS-1).